Consider the following 190-residue polypeptide: Protein GrpE (190 aa).

The disordered stretch occupies residues 1–40 (MAKEKKEEVKEEEVSEATSTEGSTDVESTNNDDLTTETQA). The segment covering 22-40 (GSTDVESTNNDDLTTETQA) has biased composition (polar residues).

Belongs to the GrpE family. As to quaternary structure, homodimer.

The protein localises to the cytoplasm. Functionally, participates actively in the response to hyperosmotic and heat shock by preventing the aggregation of stress-denatured proteins, in association with DnaK and GrpE. It is the nucleotide exchange factor for DnaK and may function as a thermosensor. Unfolded proteins bind initially to DnaJ; upon interaction with the DnaJ-bound protein, DnaK hydrolyzes its bound ATP, resulting in the formation of a stable complex. GrpE releases ADP from DnaK; ATP binding to DnaK triggers the release of the substrate protein, thus completing the reaction cycle. Several rounds of ATP-dependent interactions between DnaJ, DnaK and GrpE are required for fully efficient folding. In Pediococcus pentosaceus (strain ATCC 25745 / CCUG 21536 / LMG 10740 / 183-1w), this protein is Protein GrpE.